Here is a 373-residue protein sequence, read N- to C-terminus: Gametogenetin-binding protein 1 (373 aa).

Disordered stretches follow at residues 26–113 (VGSK…GSQT) and 237–268 (KAQR…AVDE). Polar residues predominate over residues 36-49 (NRPLNRSQPSSSPE). Residues 226–373 (LYKQLQKSAM…DEMGNWPPPE (148 aa)) are required for induction of mitochondrial fragmentation. Over residues 254-263 (SPTEERGERE) the composition is skewed to basic and acidic residues. The interaction with GGN stretch occupies residues 301 to 373 (KTFRSTDTVG…DEMGNWPPPE (73 aa)).

As to quaternary structure, interacts with CCDC159. Interacts with GGN.

It localises to the cytoplasm. It is found in the membrane. The protein resides in the golgi apparatus. Its subcellular location is the mitochondrion intermembrane space. Its function is as follows. Induces mitochondrial fragmentation, possibly by promoting DNM1L-dependent fission and may play a role in mitochondrial morphogenesis during spermatogenesis. The protein is Gametogenetin-binding protein 1 (Ggnbp1) of Rattus norvegicus (Rat).